The chain runs to 32 residues: Protein YthB (32 aa).

The polypeptide is Protein YthB (Escherichia coli (strain K12)).